Consider the following 226-residue polypeptide: ATP-dependent dethiobiotin synthetase BioD (226 aa).

12–17 is a binding site for ATP; it reads GIGKTV. T16 provides a ligand contact to Mg(2+). K37 is a catalytic residue. Substrate is bound at residue T41. Residues D49, 108-111, and 197-199 contribute to the ATP site; these read EGAG and PAG. 2 residues coordinate Mg(2+): D49 and E108.

The protein belongs to the dethiobiotin synthetase family. In terms of assembly, homodimer. The cofactor is Mg(2+).

It is found in the cytoplasm. The catalysed reaction is (7R,8S)-7,8-diammoniononanoate + CO2 + ATP = (4R,5S)-dethiobiotin + ADP + phosphate + 3 H(+). The protein operates within cofactor biosynthesis; biotin biosynthesis; biotin from 7,8-diaminononanoate: step 1/2. Functionally, catalyzes a mechanistically unusual reaction, the ATP-dependent insertion of CO2 between the N7 and N8 nitrogen atoms of 7,8-diaminopelargonic acid (DAPA, also called 7,8-diammoniononanoate) to form a ureido ring. The chain is ATP-dependent dethiobiotin synthetase BioD from Mycolicibacterium vanbaalenii (strain DSM 7251 / JCM 13017 / BCRC 16820 / KCTC 9966 / NRRL B-24157 / PYR-1) (Mycobacterium vanbaalenii).